The chain runs to 887 residues: Semaphorin-6B (887 aa).

Positions 1-26 (MWTPRAPPPRPALLFLLLLLLRVTHG) are cleaved as a signal peptide. Over 27–605 (LFPDEPPPLS…VSVNLLVTSS (579 aa)) the chain is Extracellular. The Sema domain occupies 32–525 (PPPLSVAPRD…FPRCVVRVPV (494 aa)). The N-linked (GlcNAc...) asparagine glycan is linked to asparagine 75. 2 disulfide bridges follow: cysteine 117–cysteine 127 and cysteine 145–cysteine 154. N-linked (GlcNAc...) asparagine glycans are attached at residues asparagine 156, asparagine 168, and asparagine 292. Disulfide bonds link cysteine 268–cysteine 379 and cysteine 293–cysteine 338. Asparagine 387, asparagine 442, and asparagine 463 each carry an N-linked (GlcNAc...) asparagine glycan. Cystine bridges form between cysteine 487–cysteine 519, cysteine 528–cysteine 546, cysteine 534–cysteine 580, and cysteine 538–cysteine 554. A helical membrane pass occupies residues 606–626 (VAAFVVGAVVSGFSVGWFVGL). Over 627 to 887 (RERRELARRK…TGERTAPPVP (261 aa)) the chain is Cytoplasmic. Disordered regions lie at residues 656–675 (LGERRGTGTGGRGGAGGGPG), 697–717 (HGGPHDLDSGLLPTPEQTPLP), and 759–887 (APEQ…PPVP). Over residues 662–674 (TGTGGRGGAGGGP) the composition is skewed to gly residues. Arginine 667 bears the Omega-N-methylarginine mark. The span at 707–717 (LLPTPEQTPLP) shows a compositional bias: low complexity.

Belongs to the semaphorin family.

The protein resides in the cell membrane. In terms of biological role, functions as a cell surface repellent for mossy fibers of developing neurons in the hippocampus where it plays a role in axon guidance. May function through the PLXNA4 receptor expressed by mossy cell axons. The polypeptide is Semaphorin-6B (Sema6b) (Rattus norvegicus (Rat)).